We begin with the raw amino-acid sequence, 631 residues long: ATP-dependent zinc metalloprotease FtsH (631 aa).

The Cytoplasmic segment spans residues 1–5 (MKKSN). Residues 6-26 (PWFVFFWITLLVIVLMFINFA) form a helical membrane-spanning segment. The Periplasmic segment spans residues 27–102 (RQGGNEVELE…LEFSATEKSG (76 aa)). A helical membrane pass occupies residues 103 to 123 (WLGSLLLNWGPVVLLILFCFW). Residues 124–631 (MMRGMSMGNK…KVINEKVIIS (508 aa)) lie on the Cytoplasmic side of the membrane. 196 to 203 (GSPGTGKT) serves as a coordination point for ATP. His-418 lines the Zn(2+) pocket. Glu-419 is an active-site residue. 2 residues coordinate Zn(2+): His-422 and Asp-494.

The protein in the central section; belongs to the AAA ATPase family. This sequence in the C-terminal section; belongs to the peptidase M41 family. In terms of assembly, homohexamer. Zn(2+) serves as cofactor.

It is found in the cell inner membrane. Functionally, acts as a processive, ATP-dependent zinc metallopeptidase for both cytoplasmic and membrane proteins. Plays a role in the quality control of integral membrane proteins. The sequence is that of ATP-dependent zinc metalloprotease FtsH from Endomicrobium trichonymphae.